Here is a 158-residue protein sequence, read N- to C-terminus: Large ribosomal subunit protein bL21 (158 aa).

The disordered stretch occupies residues 106 to 158 (SKPKKAAAKPIKEEATAAKGTKDTAVEKKAEKTAEKKTASQKKAAVASKSKKD). The span at 115–143 (PIKEEATAAKGTKDTAVEKKAEKTAEKKT) shows a compositional bias: basic and acidic residues. Over residues 146–158 (QKKAAVASKSKKD) the composition is skewed to low complexity.

It belongs to the bacterial ribosomal protein bL21 family. In terms of assembly, part of the 50S ribosomal subunit. Contacts protein L20.

This protein binds to 23S rRNA in the presence of protein L20. In Bartonella tribocorum (strain CIP 105476 / IBS 506), this protein is Large ribosomal subunit protein bL21.